The primary structure comprises 466 residues: Hydroxyproline dehydrogenase (466 aa).

This sequence belongs to the proline oxidase family. FAD serves as cofactor.

It carries out the reaction trans-4-hydroxy-L-proline + a quinone = (3R,5S)-1-pyrroline-3-hydroxy-5-carboxylate + a quinol + H(+). It catalyses the reaction L-proline + a quinone = (S)-1-pyrroline-5-carboxylate + a quinol + H(+). It participates in amino-acid degradation; L-proline degradation into L-glutamate; L-glutamate from L-proline: step 1/2. In terms of biological role, dehydrogenase that converts trans-4-L-hydroxyproline to delta-1-pyrroline-3-hydroxy-5-carboxylate (Hyp) using a quinone as the terminal electron acceptor. Can also use proline as a substrate but with a very much lower efficiency. Does not react with other diastereomers of Hyp: trans-4-D-hydroxyproline and cis-4-L-hydroxyproline. The protein is Hydroxyproline dehydrogenase (prodh2) of Xenopus laevis (African clawed frog).